The primary structure comprises 229 residues: Multiple organellar RNA editing factor 5, chloroplastic/mitochondrial (229 aa).

A chloroplast and mitochondrion-targeting transit peptide spans 1–57 (MAKTLARSTASRITKRLISTSGATTPSPSYILSRRSTPVFSHAVGFISSLNRFTTIR).

This sequence belongs to the MORF family. In terms of assembly, homodimer and heterodimers with MORF8/RIP1, MORF3/RIP3, MORF6/RIP6, MORF7/RIP7 and MORF9/RIP9.

It is found in the mitochondrion. Its subcellular location is the plastid. It localises to the chloroplast. Involved in organellar RNA editing. Required for the processing of few RNA editing sites in mitochondria. This Arabidopsis thaliana (Mouse-ear cress) protein is Multiple organellar RNA editing factor 5, chloroplastic/mitochondrial.